The primary structure comprises 419 residues: MAGDSRNAMNQDMEIGVTSQDHKKIPKQARDYIPIATDRTRLLTEGKKPRQRYMEKTGKCNVHHGNVQETYRYLSDLFTTLVDLKWRFNLLVFTMVYTITWLFFGFIWWLIAYVRGDLDHVGDQEWIPCVENLSGFVSAFLFSIETETTIGYGFRVITEKCPEGIILLLVQAILGSIVNAFMVGCMFVKISQPKKRAETLMFSNNAVISMRDEKLCLMFRVGDLRNSHIVEASIRAKLIKSRQTKEGEFIPLNQTDINVGFDTGDDRLFLVSPLIISHEINEKSPFWEMSRAQLEQEEFEVVVILEGMVEATGMTCQARSSYMDTEVLWGHRFTPVLTLEKGFYEVDYNTFHDTYETNTPSCCAKELAEMKRSGRLLQYLPSPPLLGGCAEAGNEAEAEKDEEGEPNGLSVSQATRGSM.

The Cytoplasmic portion of the chain corresponds to 1–86 (MAGDSRNAMN…LFTTLVDLKW (86 aa)). The residue at position 5 (S5) is a Phosphoserine. The helical transmembrane segment at 87 to 111 (RFNLLVFTMVYTITWLFFGFIWWLI) threads the bilayer. Residues 112–135 (AYVRGDLDHVGDQEWIPCVENLSG) lie on the Extracellular side of the membrane. Positions 136 to 147 (FVSAFLFSIETE) form an intramembrane region, helical; Pore-forming. The segment at residues 148 to 154 (TTIGYGF) is an intramembrane region (pore-forming). A Selectivity filter motif is present at residues 149 to 154 (TIGYGF). Residues 155–163 (RVITEKCPE) are Extracellular-facing. Residues 164–185 (GIILLLVQAILGSIVNAFMVGC) traverse the membrane as a helical segment. The Cytoplasmic portion of the chain corresponds to 186–419 (MFVKISQPKK…SVSQATRGSM (234 aa)). The disordered stretch occupies residues 388–419 (GCAEAGNEAEAEKDEEGEPNGLSVSQATRGSM). Residues 394–405 (NEAEAEKDEEGE) are compositionally biased toward acidic residues. The span at 409 to 419 (LSVSQATRGSM) shows a compositional bias: polar residues.

This sequence belongs to the inward rectifier-type potassium channel (TC 1.A.2.1) family. KCNJ5 subfamily. As to quaternary structure, associates with KCNJ3/GIRK1 to form a G-protein-activated heteromultimer pore-forming unit. Associates with KCNJ6/GRIK2 to form a G-protein-activated heteromultimer pore-forming unit. Expressed in the heart.

The protein localises to the membrane. It carries out the reaction K(+)(in) = K(+)(out). Heteromultimer composed of KCNJ3/GIRK1 and KCNJ5/GIRK4 is activated by phosphatidylinositol 4,5 biphosphate (PtdIns(4,5)P2). In terms of biological role, inward rectifier potassium channels are characterized by a greater tendency to allow potassium to flow into the cell rather than out of it. Their voltage dependence is regulated by the concentration of extracellular potassium; as external potassium is raised, the voltage range of the channel opening shifts to more positive voltages. The inward rectification is mainly due to the blockage of outward current by internal magnesium. Can be blocked by external barium. This potassium channel is controlled by G proteins. Forms a functional channel in association with KCNJ3/GIRK1. The protein is G protein-activated inward rectifier potassium channel 4 (Kcnj5) of Mus musculus (Mouse).